Consider the following 56-residue polypeptide: MGHQNIWYSHPRKYGKGSRSCKICGNKHGLIRKYSMNICRQCFREYAKDIGFIKYR.

Zn(2+) is bound by residues Cys21, Cys24, Cys39, and Cys42.

It belongs to the universal ribosomal protein uS14 family. Zn(2+) serves as cofactor.

This is Small ribosomal subunit protein uS14 (RPS29) from Griffithsia japonica (Red alga).